The primary structure comprises 355 residues: Histidinol-phosphate aminotransferase (355 aa).

An N6-(pyridoxal phosphate)lysine modification is found at lysine 218.

The protein belongs to the class-II pyridoxal-phosphate-dependent aminotransferase family. Histidinol-phosphate aminotransferase subfamily. As to quaternary structure, homodimer. It depends on pyridoxal 5'-phosphate as a cofactor.

The enzyme catalyses L-histidinol phosphate + 2-oxoglutarate = 3-(imidazol-4-yl)-2-oxopropyl phosphate + L-glutamate. Its pathway is amino-acid biosynthesis; L-histidine biosynthesis; L-histidine from 5-phospho-alpha-D-ribose 1-diphosphate: step 7/9. The sequence is that of Histidinol-phosphate aminotransferase from Pelodictyon phaeoclathratiforme (strain DSM 5477 / BU-1).